Here is a 399-residue protein sequence, read N- to C-terminus: Semaphorin-like protein 139 (399 aa).

An N-terminal signal peptide occupies residues 1-14 (MIPLLFILFYFTNC). The region spanning 15–399 (IEWHKFETSE…IPRMKKILKM (385 aa)) is the Sema domain.

The protein belongs to the semaphorin family. In terms of assembly, interacts with host VESPR.

The protein localises to the secreted. Functionally, acts as a semaphorin-like protein and binds to host plexin C1 receptor. May alter the movement of plexin C1-expressing cells including dendritic cells, monocytes, or granulocytes in the proximity of infected cells. May also regulate host cell cytoskeleton of neighboring cells to improve viral infection. The chain is Semaphorin-like protein 139 (EVM139) from Ectromelia virus (strain Moscow) (ECTV).